The primary structure comprises 141 residues: Large ribosomal subunit protein uL11 (141 aa).

Belongs to the universal ribosomal protein uL11 family. As to quaternary structure, part of the ribosomal stalk of the 50S ribosomal subunit. Interacts with L10 and the large rRNA to form the base of the stalk. L10 forms an elongated spine to which L12 dimers bind in a sequential fashion forming a multimeric L10(L12)X complex. One or more lysine residues are methylated.

Functionally, forms part of the ribosomal stalk which helps the ribosome interact with GTP-bound translation factors. This is Large ribosomal subunit protein uL11 from Synechococcus sp. (strain WH7803).